The following is a 259-amino-acid chain: Putative electron transfer flavoprotein subunit YgcR (259 aa).

This sequence belongs to the ETF beta-subunit/FixA family. YgcQ and YgcR form a heterodimer.

Its function is as follows. May play a role in a redox process. The sequence is that of Putative electron transfer flavoprotein subunit YgcR (ygcR) from Escherichia coli (strain K12).